The primary structure comprises 239 residues: Purine nucleoside phosphorylase DeoD-type (239 aa).

His5 contacts a purine D-ribonucleoside. Residues Gly21, Arg25, Arg44, and 88 to 91 (RVGS) each bind phosphate. A purine D-ribonucleoside-binding positions include 180 to 182 (EME) and 204 to 205 (SD). The active-site Proton donor is Asp205.

It belongs to the PNP/UDP phosphorylase family. In terms of assembly, homohexamer; trimer of homodimers.

The catalysed reaction is a purine D-ribonucleoside + phosphate = a purine nucleobase + alpha-D-ribose 1-phosphate. It carries out the reaction a purine 2'-deoxy-D-ribonucleoside + phosphate = a purine nucleobase + 2-deoxy-alpha-D-ribose 1-phosphate. Its function is as follows. Catalyzes the reversible phosphorolytic breakdown of the N-glycosidic bond in the beta-(deoxy)ribonucleoside molecules, with the formation of the corresponding free purine bases and pentose-1-phosphate. This chain is Purine nucleoside phosphorylase DeoD-type, found in Yersinia pseudotuberculosis serotype O:1b (strain IP 31758).